A 444-amino-acid polypeptide reads, in one-letter code: MGALIPSSTLFNIFDFNPKKVRIAFIAVGLRGQTHVENMARRDDVEIVAFADPDPYMVGRAQEILKKNGKKPAKVFGNGNDDYKNMLKDKNIDAVFVSSPWEWHHEHGVAAMKAGKIVGMEVSGAITLEECWDYVKVSEQTGVPLMALENVCYRRDVMAILNMVRKGMFGELVHGTGGYQHDLRPVLFNSGINGKNGDGVEFGEKAFSEAKWRTNHYKNRNGELYPTHGVGPLHTMMDINRGNRLLRLSSFASKARGLHKYIVDKGGESHPNAKVEWKQGDIVTTQIQCHNGETIVLTHDTSLQRPYNLGFKVQGTEGLWEDFGWGEAAQGFIYFEKIMNHSHRWDSSEKWIKEYDHPMWKKHEQKAVGAGHGGMDYFLDNTFVECIKRNEAFPLDVYDLATWYSITPLSEKSIAENGAVQEIPDFTNGKWKNAKNTFAINDDY.

Residues 30 to 31 (LR), Asp-52, Asn-80, 101 to 104 (WEWH), His-107, 121 to 122 (EV), and Asn-150 each bind NAD(+). Tyr-179 provides a ligand contact to substrate. Residue 208–212 (SEAKW) participates in NAD(+) binding. Residues Arg-213, 225–228 (YPTH), and Tyr-307 contribute to the substrate site. NAD(+) is bound at residue Tyr-225.

It belongs to the Gfo/Idh/MocA family. Glycosyl hydrolase 109 subfamily. It depends on NAD(+) as a cofactor.

The enzyme catalyses Cleavage of non-reducing alpha-(1-&gt;3)-N-acetylgalactosamine residues from human blood group A and AB mucin glycoproteins, Forssman hapten and blood group A lacto series glycolipids.. In terms of biological role, glycosidase that has specific alpha-N-acetylgalactosaminidase activity. The protein is Alpha-N-acetylgalactosaminidase (nagA) of Elizabethkingia meningoseptica (Chryseobacterium meningosepticum).